The primary structure comprises 502 residues: Probable ADP-dependent glucokinase (502 aa).

Positions 1–32 are cleaved as a signal peptide; that stretch reads MFSETFVPSIFSYKHRLLHLSVLFFIVPYWYS. The 454-residue stretch at 44 to 497 folds into the ADPK domain; that stretch reads SVETAMFLSW…LLYSQFYRLN (454 aa). 2 N-linked (GlcNAc...) asparagine glycosylation sites follow: N89 and N190. Mg(2+) is bound by residues E290, E320, and D481. D481 serves as the catalytic Proton acceptor.

The protein belongs to the ADP-dependent glucokinase family. Monomer. The cofactor is Mg(2+).

Its subcellular location is the secreted. The enzyme catalyses D-glucose + ADP = D-glucose 6-phosphate + AMP + H(+). Its pathway is carbohydrate degradation; glycolysis. In terms of biological role, catalyzes the phosphorylation of D-glucose to D-glucose 6-phosphate using ADP as the phosphate donor. GDP and CDP can replace ADP, but with reduced efficiency. In Caenorhabditis elegans, this protein is Probable ADP-dependent glucokinase.